Reading from the N-terminus, the 271-residue chain is Glutamate racemase (271 aa).

Substrate-binding positions include Asp9–Ser10 and Tyr41–Gly42. Residue Cys72 is the Proton donor/acceptor of the active site. Asn73–Thr74 provides a ligand contact to substrate. The active-site Proton donor/acceptor is Cys183. Thr184–His185 provides a ligand contact to substrate.

Belongs to the aspartate/glutamate racemases family.

The enzyme catalyses L-glutamate = D-glutamate. Its pathway is cell wall biogenesis; peptidoglycan biosynthesis. Functionally, provides the (R)-glutamate required for cell wall biosynthesis. The sequence is that of Glutamate racemase from Exiguobacterium sibiricum (strain DSM 17290 / CCUG 55495 / CIP 109462 / JCM 13490 / 255-15).